We begin with the raw amino-acid sequence, 537 residues long: Sodium/hydrogen exchanger 9B2 (537 aa).

The span at 1-10 (MGDEDKRITY) shows a compositional bias: basic and acidic residues. Residues 1 to 33 (MGDEDKRITYEDSEPSTGMNYTPSMHQETQEET) form a disordered region. Residues 1-86 (MGDEDKRITY…ACPPHGLLDR (86 aa)) lie on the Cytoplasmic side of the membrane. The span at 15–27 (PSTGMNYTPSMHQ) shows a compositional bias: polar residues. Position 49 is a phosphoserine (Ser-49). The chain crosses the membrane as a helical span at residues 87–104 (VVTNVTIIVLLWAVIWSI). The Extracellular portion of the chain corresponds to 105 to 113 (TGSECLPGG). A helical membrane pass occupies residues 114–133 (NLFGIIILFYCAIIGGKLLG). At 134–144 (LIKLPTLPPLP) the chain is on the cytoplasmic side. Residues 145 to 161 (SLLGMLLAGFLIRNIPV) form a helical membrane-spanning segment. Residues 162–171 (INDNVQIKHK) lie on the Extracellular side of the membrane. The helical transmembrane segment at 172 to 189 (WSSSLRSIALSIILVRAG) threads the bilayer. Over 190 to 200 (LGLDSKALKKL) the chain is Cytoplasmic. The helical transmembrane segment at 201-227 (KGVCVRLSMGPCIVEACTSALLAHYLL) threads the bilayer. Residues 228 to 233 (GLPWQW) lie on the Extracellular side of the membrane. A helical membrane pass occupies residues 234–242 (GFILGFVLG). Over 243–270 (AVSPAVVVPSMLLLQGGGYGVEKGVPTL) the chain is Cytoplasmic. The Na(+) site is built by Val-244, Gly-275, Asp-278, and Asp-279. A helical membrane pass occupies residues 271–290 (LMAAGSFDDILAITGFNTCL). The Extracellular portion of the chain corresponds to 291–300 (GIAFSTGSTV). A helical transmembrane segment spans residues 301-324 (FNVLRGVLEVVIGVATGSVLGFFI). Topologically, residues 325–339 (QYFPSCDQDKLVCKR) are cytoplasmic. A helical transmembrane segment spans residues 340 to 357 (TFLVLGLSVLAVFSSVHF). Over 358 to 361 (GFPG) the chain is Extracellular. A helical transmembrane segment spans residues 362–373 (SGGLCTLVMAFL). Residues 374–390 (AGMGWTSEKAEVEKIIA) are Cytoplasmic-facing. Residues 391–411 (VAWDIFQPLLFGLIGAEVSIA) traverse the membrane as a helical segment. The Extracellular portion of the chain corresponds to 412 to 417 (SLRPET). A helical membrane pass occupies residues 418–440 (VGLCVATVGIAVLIRILTTFLMV). Over 441 to 461 (CFAGFNLKEKIFISFAWLPKA) the chain is Cytoplasmic. Residues 462–473 (TVQAAIGSVALD) form a helical membrane-spanning segment. Topologically, residues 474–486 (TARSHGEKQLEDY) are extracellular. The chain crosses the membrane as a helical span at residues 487–509 (GMDVLTVAFLSILITAPIGSLLI). Topologically, residues 510-537 (GLLGPRLLQKVEHQNKDEEVQGETSVQV) are cytoplasmic.

It belongs to the monovalent cation:proton antiporter 1 (CPA1) transporter (TC 2.A.36) family. In terms of assembly, homodimer; dimerization is essential for SLC9B2 activity. Lipids seem to play a role in the stabilization of the dimerization subdomain.

It is found in the cell membrane. The protein localises to the mitochondrion membrane. Its subcellular location is the endosome membrane. The protein resides in the recycling endosome membrane. It localises to the cytoplasmic vesicle. It is found in the secretory vesicle. The protein localises to the synaptic vesicle membrane. Its subcellular location is the basolateral cell membrane. The protein resides in the apical cell membrane. The enzyme catalyses Li(+)(out) + H(+)(in) = Li(+)(in) + H(+)(out). It catalyses the reaction Li(+)(in) + Na(+)(out) = Li(+)(out) + Na(+)(in). It carries out the reaction Na(+)(in) + H(+)(out) = Na(+)(out) + H(+)(in). Allosterically inhibited by the N-terminal domain. Inhibited by phloretin. Electroneutral Na(+) Li(+)/H(+) antiporter that extrudes Na(+) or Li(+) in exchange for external protons across the membrane. Uses the proton gradient/membrane potential to extrude sodium. Contributes to the regulation of intracellular pH and sodium homeostasis. Also able to mediate Na(+)/Li(+) antiporter activity in kidney. May play a physiological role in renal tubular function and blood pressure homeostasis. Plays an important role for insulin secretion and clathrin-mediated endocytosis in beta-cells. Involved in sperm motility and fertility. It is controversial whether SLC9B2 plays a role in osteoclast differentiation or not. This is Sodium/hydrogen exchanger 9B2 (SLC9B2) from Pongo abelii (Sumatran orangutan).